A 244-amino-acid polypeptide reads, in one-letter code: MVIKMSLTNKVPEKDVHDLFTRVAPHYDQMNNLISLGTQNGWRKKFFKKLKVKAGDFALDLCCGTGDLTIALAKQVGPSGNVIGLDFNQKMLDLADKKIRGQNLQKEIQLKQGDAMHLPYTDQSFDIVTIGFGLRNVPDADQVLKEIYRVLKPDGKVGILETSQPTNPIIKLGWESYFKLFPNFAKLLGANVDDYKYLSHTTAKFISATRLKEMLEQDGFKNVIITKLNLGAGAIHIGIKKKMR.

S-adenosyl-L-methionine-binding positions include Thr65, Asp86, and 114-115 (DA).

This sequence belongs to the class I-like SAM-binding methyltransferase superfamily. MenG/UbiE family.

The enzyme catalyses a 2-demethylmenaquinol + S-adenosyl-L-methionine = a menaquinol + S-adenosyl-L-homocysteine + H(+). It participates in quinol/quinone metabolism; menaquinone biosynthesis; menaquinol from 1,4-dihydroxy-2-naphthoate: step 2/2. Its function is as follows. Methyltransferase required for the conversion of demethylmenaquinol (DMKH2) to menaquinol (MKH2). This is Demethylmenaquinone methyltransferase from Lactobacillus johnsonii (strain CNCM I-12250 / La1 / NCC 533).